Reading from the N-terminus, the 164-residue chain is Peptide deformylase-like (164 aa).

The active site involves Glu134.

Belongs to the polypeptide deformylase family.

In Brucella melitensis biotype 1 (strain ATCC 23456 / CCUG 17765 / NCTC 10094 / 16M), this protein is Peptide deformylase-like.